The primary structure comprises 78 residues: D-alanyl carrier protein (78 aa).

A Carrier domain is found at 1 to 78 (MEFREQVLDL…KIVEVLEELR (78 aa)). S36 bears the O-(pantetheine 4'-phosphoryl)serine mark.

The protein belongs to the DltC family. Post-translationally, 4'-phosphopantetheine is transferred from CoA to a specific serine of apo-DCP.

It localises to the cytoplasm. It functions in the pathway cell wall biogenesis; lipoteichoic acid biosynthesis. Functionally, carrier protein involved in the D-alanylation of lipoteichoic acid (LTA). The loading of thioester-linked D-alanine onto DltC is catalyzed by D-alanine--D-alanyl carrier protein ligase DltA. The DltC-carried D-alanyl group is further transferred to cell membrane phosphatidylglycerol (PG) by forming an ester bond, probably catalyzed by DltD. D-alanylation of LTA plays an important role in modulating the properties of the cell wall in Gram-positive bacteria, influencing the net charge of the cell wall. In Staphylococcus xylosus, this protein is D-alanyl carrier protein.